Reading from the N-terminus, the 206-residue chain is Platelet glycoprotein Ib beta chain (206 aa).

Residues 1–26 form the signal peptide; it reads MGSRPRGALSLLLLLLAPPSRPASGC. Disulfide bonds link C26/C32 and C30/C39. The LRRNT domain occupies 27 to 55; it reads PAPCRCSETRVDCGRRGLTWASLPAAFPP. Over 27–150 the chain is Extracellular; sequence PAPCRCSETR…CAPGLLCWGA (124 aa). The LRR repeat unit spans residues 60–83; it reads LVLTDNNLTALPPGLLDTLPALRR. Residues 89 to 143 form the LRRCT domain; it reads NPWRCDCRLLPLRAWLAGRPEREFYRDLRCVAPLALRGRLLPYVAEDELRAACAP. Intrachain disulfides connect C93–C118 and C95–C141. Residues 151–171 traverse the membrane as a helical segment; that stretch reads LVAQLALLVLGLLHALLLALL. The Cytoplasmic segment spans residues 172–206; it reads LSRLRRLRAQARARSTREFSLTAPLVAESAGGGAS. The residue at position 186 (S186) is a Phosphoserine. S191 carries the phosphoserine; by PKA modification. Position 193 is a phosphothreonine (T193). A Phosphoserine modification is found at S200.

As to quaternary structure, two GP-Ib beta are disulfide-linked to one GP-Ib alpha. GP-IX is complexed with the GP-Ib heterodimer via a non covalent linkage. Interacts with TRAF4.

Its subcellular location is the membrane. In terms of biological role, gp-Ib, a surface membrane protein of platelets, participates in the formation of platelet plugs by binding to von Willebrand factor, which is already bound to the subendothelium. The polypeptide is Platelet glycoprotein Ib beta chain (Gp1bb) (Rattus norvegicus (Rat)).